Consider the following 509-residue polypeptide: tRNA-2-methylthio-N(6)-dimethylallyladenosine synthase (509 aa).

A compositionally biased stretch (polar residues) spans 1 to 15; sequence MNEQQRLASQQVNSS. Residues 1 to 26 are disordered; it reads MNEQQRLASQQVNSSTKKEEKDYSKY. Residues 16–25 are compositionally biased toward basic and acidic residues; sequence TKKEEKDYSK. The MTTase N-terminal domain occupies 66 to 184; sequence RKFYIRTYGC…LPYILKDAMF (119 aa). [4Fe-4S] cluster is bound by residues C75, C111, C145, C221, C225, and C228. The Radical SAM core domain maps to 207-437; that stretch reads RRGDIKAWVN…NALVNKLAIE (231 aa). The TRAM domain maps to 440-503; it reads DRYKGQIVEV…TWSLNGELVE (64 aa).

The protein belongs to the methylthiotransferase family. MiaB subfamily. In terms of assembly, monomer. The cofactor is [4Fe-4S] cluster.

It is found in the cytoplasm. It catalyses the reaction N(6)-dimethylallyladenosine(37) in tRNA + (sulfur carrier)-SH + AH2 + 2 S-adenosyl-L-methionine = 2-methylsulfanyl-N(6)-dimethylallyladenosine(37) in tRNA + (sulfur carrier)-H + 5'-deoxyadenosine + L-methionine + A + S-adenosyl-L-homocysteine + 2 H(+). Catalyzes the methylthiolation of N6-(dimethylallyl)adenosine (i(6)A), leading to the formation of 2-methylthio-N6-(dimethylallyl)adenosine (ms(2)i(6)A) at position 37 in tRNAs that read codons beginning with uridine. This is tRNA-2-methylthio-N(6)-dimethylallyladenosine synthase from Bacillus cereus (strain ZK / E33L).